Here is a 212-residue protein sequence, read N- to C-terminus: Ribosomal RNA small subunit methyltransferase G (212 aa).

S-adenosyl-L-methionine is bound by residues G73, 127 to 128 (IE), and R143.

Belongs to the methyltransferase superfamily. RNA methyltransferase RsmG family.

It is found in the cytoplasm. It catalyses the reaction guanosine(527) in 16S rRNA + S-adenosyl-L-methionine = N(7)-methylguanosine(527) in 16S rRNA + S-adenosyl-L-homocysteine. Its function is as follows. Specifically methylates the N7 position of guanine in position 527 of 16S rRNA. The chain is Ribosomal RNA small subunit methyltransferase G from Methylobacterium nodulans (strain LMG 21967 / CNCM I-2342 / ORS 2060).